A 416-amino-acid chain; its full sequence is Alpha-1-antiproteinase (416 aa).

The N-terminal stretch at 1-24 (MALSITRGLLLLAALCCLAPTSLA) is a signal peptide. 4 N-linked (GlcNAc...) asparagine glycosylation sites follow: N68, N105, N143, and N269. Positions 371 to 390 (GATFLEAIPMSLPPDVEFNR) are RCL. S381 bears the Phosphoserine mark.

The protein belongs to the serpin family. Interacts with CELA2A. Interacts with ERGIC3 and LMAN1/ERGIC53. Interacts with PRSS1/Trypsin. Plasma.

The protein resides in the secreted. Its function is as follows. Inhibits human leukocyte elastase, pig pancreatic elastase and bovine trypsin on a 1:1 molar basis. The chain is Alpha-1-antiproteinase from Ovis aries (Sheep).